Reading from the N-terminus, the 397-residue chain is Major outer membrane porin, serovar C (397 aa).

The first 22 residues, 1 to 22 (MKKLLKSVLVFAALSSASSLQA), serve as a signal peptide directing secretion.

It belongs to the chlamydial porin (CP) (TC 1.B.2) family. In terms of assembly, part of a disulfide cross-linked outer membrane complex (COMC) composed of the major outer membrane porin (MOMP), the small cysteine-rich protein (OmcA) and the large cysteine-rich periplasmic protein (OmcB).

It is found in the cell outer membrane. In terms of biological role, in elementary bodies (EBs, the infectious stage, which is able to survive outside the host cell) provides the structural integrity of the outer envelope through disulfide cross-links with the small cysteine-rich protein and the large cysteine-rich periplasmic protein. It has been described in publications as the Sarkosyl-insoluble COMC (Chlamydia outer membrane complex), and serves as the functional equivalent of peptidoglycan. Its function is as follows. Permits diffusion of specific solutes through the outer membrane. In Chlamydia trachomatis, this protein is Major outer membrane porin, serovar C (ompA).